The chain runs to 260 residues: Coiled-coil domain-containing protein 127 (260 aa).

Residues 76-139 adopt a coiled-coil conformation; sequence AVISEHRRAV…EKSRLQPLRN (64 aa).

The polypeptide is Coiled-coil domain-containing protein 127 (Ccdc127) (Mus musculus (Mouse)).